The chain runs to 118 residues: Large ribosomal subunit protein bL19 (118 aa).

This sequence belongs to the bacterial ribosomal protein bL19 family.

In terms of biological role, this protein is located at the 30S-50S ribosomal subunit interface and may play a role in the structure and function of the aminoacyl-tRNA binding site. This chain is Large ribosomal subunit protein bL19, found in Ligilactobacillus salivarius (strain UCC118) (Lactobacillus salivarius).